The following is a 562-amino-acid chain: Tubby-related protein 2 (562 aa).

The interval 1–81 (MDREGPRGPR…RRGEERFQSD (81 aa)) is disordered. A compositionally biased stretch (basic and acidic residues) spans 35-46 (QKLEQQRQLFEK). 3 positions are modified to phosphoserine: Ser152, Ser153, and Ser155. Residues 179 to 294 (LRRGWLASPG…SNHNAWNMTC (116 aa)) are disordered. At Thr211 the chain carries Phosphothreonine. A Phosphoserine modification is found at Ser213. Over residues 225–240 (DGDHGDLAPCKVEENT) the composition is skewed to basic and acidic residues. The span at 285 to 294 (SNHNAWNMTC) shows a compositional bias: polar residues.

This sequence belongs to the TUB family. Expressed in retina and testis.

Its subcellular location is the cytoplasm. It localises to the secreted. The protein is Tubby-related protein 2 (Tulp2) of Mus musculus (Mouse).